Here is a 251-residue protein sequence, read N- to C-terminus: Insulin-induced gene 1 protein (251 aa).

Residues 1-58 are Cytoplasmic-facing; the sequence is MQTLEEHCWSCSCTRGRDKKGTRLSTWLAQRAAKAMSSLNSLLSLAYHTLASSEGRSL. The helical transmembrane segment at 59 to 81 threads the bilayer; sequence IRRSLVLFAVGVFLALVLNLLQI. Residues 82–100 are Extracellular-facing; sequence QRNVTLFPEEVIATIFSSA. A helical membrane pass occupies residues 101-118; that stretch reads WWVPPCCGTAAAVVGLLY. Over 119 to 133 the chain is Cytoplasmic; it reads PCIDSHLGEPHKFKR. Residues 134–156 traverse the membrane as a helical segment; that stretch reads EWASVMRCIAVFVGINHASAKLD. The Extracellular segment spans residues 157–159; the sequence is FAN. A helical membrane pass occupies residues 160–178; sequence NVQLSLTLAALSLGLWWTF. At 179–183 the chain is on the cytoplasmic side; it reads DRSRS. A helical transmembrane segment spans residues 184 to 205; it reads GLGLGITIAFLATLITQFLVYN. The Extracellular segment spans residues 206 to 219; the sequence is GVYQYTSPDFLYIR. A helical membrane pass occupies residues 220 to 237; the sequence is SWLPCIFFSGGVTVGNIG. Over 238–251 the chain is Cytoplasmic; it reads RQLAMGSSEKTHSD. The short motif at 245–251 is the KxHxx element; that stretch reads SEKTHSD.

The protein belongs to the INSIG family. In terms of assembly, interacts with scap; interaction is direct and only takes place in the presence of sterols; it prevents interaction between scap and the coat protein complex II (COPII). Associates with the SCAP-SREBP complex; association is mediated via its interaction with scap and only takes place in the presence of sterols.

The protein localises to the endoplasmic reticulum membrane. Oxysterol-binding protein that mediates feedback control of cholesterol synthesis by controlling both endoplasmic reticulum to Golgi transport of scap and degradation of hmgcr. Acts as a negative regulator of cholesterol biosynthesis by mediating the retention of the SCAP-SREBP complex in the endoplasmic reticulum, thereby blocking the processing of sterol regulatory element-binding proteins (SREBPs). Binds oxysterol, including 25-hydroxycholesterol, regulating interaction with scap and retention of the SCAP-SREBP complex in the endoplasmic reticulum. In presence of oxysterol, interacts with scap, retaining the SCAP-SREBP complex in the endoplasmic reticulum, thereby preventing scap from escorting SREBPs to the Golgi. Sterol deprivation reduces oxysterol-binding, disrupting the interaction between insig1 and scap, thereby promoting Golgi transport of the SCAP-SREBP complex, followed by processing and nuclear translocation of SREBPs. Also regulates cholesterol synthesis by regulating degradation of hmgcr. This Xenopus tropicalis (Western clawed frog) protein is Insulin-induced gene 1 protein.